Consider the following 343-residue polypeptide: Multidrug resistance protein MdtN (343 aa).

Residues 1 to 12 are Cytoplasmic-facing; it reads MESTPKKAPRSK. The chain crosses the membrane as a helical; Signal-anchor for type II membrane protein span at residues 13–33; that stretch reads FPALLVVALALVALVFVIWRV. The Periplasmic portion of the chain corresponds to 34–343; it reads DSAPSTNDAY…ASAVANLEPQ (310 aa).

It belongs to the membrane fusion protein (MFP) (TC 8.A.1) family. Could be part of a tripartite efflux system composed of MdtN, MdtO and MdtP.

Its subcellular location is the cell inner membrane. Could be involved in resistance to puromycin, acriflavine and tetraphenylarsonium chloride. In Shigella flexneri, this protein is Multidrug resistance protein MdtN (mdtN).